The following is a 250-amino-acid chain: Acetylglutamate kinase (250 aa).

Residues Gly-41–Gly-42, Arg-63, and Asn-156 each bind substrate.

Belongs to the acetylglutamate kinase family. ArgB subfamily.

It localises to the cytoplasm. It catalyses the reaction N-acetyl-L-glutamate + ATP = N-acetyl-L-glutamyl 5-phosphate + ADP. The protein operates within amino-acid biosynthesis; L-arginine biosynthesis; N(2)-acetyl-L-ornithine from L-glutamate: step 2/4. Functionally, catalyzes the ATP-dependent phosphorylation of N-acetyl-L-glutamate. In Listeria monocytogenes serovar 1/2a (strain ATCC BAA-679 / EGD-e), this protein is Acetylglutamate kinase.